The chain runs to 484 residues: Arachin Ahy-3 (484 aa).

Residues methionine 1–serine 20 form the signal peptide. Intrachain disulfides connect cysteine 32–cysteine 65 and cysteine 108–cysteine 305. Residues glutamine 35–arginine 253 enclose the Cupin type-1 1 domain. The tract at residues glutamine 208 to phenylalanine 233 is disordered. Residues aspartate 295–asparagine 298 constitute a propeptide that is removed on maturation. Residues methionine 311 to arginine 460 enclose the Cupin type-1 2 domain. A propeptide spanning residues methionine 479 to alanine 484 is cleaved from the precursor.

The protein belongs to the 11S seed storage protein (globulins) family. As to quaternary structure, hexamer; each subunit is composed of an acidic and a basic chain derived from a single precursor and linked by a disulfide bond.

In Arachis hypogaea (Peanut), this protein is Arachin Ahy-3.